A 588-amino-acid chain; its full sequence is Aspartate--tRNA ligase (588 aa).

Glu-172 contributes to the L-aspartate binding site. Positions 196-199 are aspartate; that stretch reads QLFK. Arg-218 is an L-aspartate binding site. Residues 218–220 and Gln-227 contribute to the ATP site; that span reads RDE. His-449 lines the L-aspartate pocket. Position 483 (Glu-483) interacts with ATP. Arg-490 lines the L-aspartate pocket. Residue 535–538 coordinates ATP; it reads GLDR.

Belongs to the class-II aminoacyl-tRNA synthetase family. Type 1 subfamily. In terms of assembly, homodimer.

It is found in the cytoplasm. The enzyme catalyses tRNA(Asp) + L-aspartate + ATP = L-aspartyl-tRNA(Asp) + AMP + diphosphate. Catalyzes the attachment of L-aspartate to tRNA(Asp) in a two-step reaction: L-aspartate is first activated by ATP to form Asp-AMP and then transferred to the acceptor end of tRNA(Asp). The chain is Aspartate--tRNA ligase from Haemophilus influenzae (strain ATCC 51907 / DSM 11121 / KW20 / Rd).